The primary structure comprises 396 residues: Ribosomal RNA large subunit methyltransferase I (396 aa).

The 78-residue stretch at 2–79 (TSAVYLQAGR…EKEVIDQHFF (78 aa)) folds into the PUA domain.

The protein belongs to the methyltransferase superfamily. RlmI family.

It localises to the cytoplasm. The enzyme catalyses cytidine(1962) in 23S rRNA + S-adenosyl-L-methionine = 5-methylcytidine(1962) in 23S rRNA + S-adenosyl-L-homocysteine + H(+). Functionally, specifically methylates the cytosine at position 1962 (m5C1962) of 23S rRNA. The polypeptide is Ribosomal RNA large subunit methyltransferase I (Pseudoalteromonas translucida (strain TAC 125)).